The sequence spans 399 residues: Lysosomal acid lipase/cholesteryl ester hydrolase (399 aa).

The first 27 residues, 1 to 27 (MKMRFLGLVVCLVLWTLHSEASGGKLT), serve as a signal peptide directing secretion. Positions 28-76 (AVNPETNMNVSEIISYWGFPSEEYLVETEDGYILCLNRIPHGRKNHSDK) are cleaved as a propeptide — removed in mature form. Residues Asn36, Asn72, Asn101, and Asn161 are each glycosylated (N-linked (GlcNAc...) asparagine). Residues 80-380 (PVVFLQHGLL…EWEHLDFIWG (301 aa)) enclose the AB hydrolase-1 domain. Catalysis depends on Ser174, which acts as the Charge relay system. N-linked (GlcNAc...) asparagine glycans are attached at residues Asn273 and Asn321. Residue His374 is the Charge relay system of the active site.

The protein belongs to the AB hydrolase superfamily. Lipase family. As to quaternary structure, monomer. In terms of processing, glycosylation is not essential for catalytic activity.

The protein localises to the lysosome. It catalyses the reaction a sterol ester + H2O = a sterol + a fatty acid + H(+). It carries out the reaction cholesteryl (9Z-octadecenoate) + H2O = cholesterol + (9Z)-octadecenoate + H(+). The enzyme catalyses a triacylglycerol + H2O = a 1,2-diacylglycerol + a fatty acid + H(+). The catalysed reaction is 1,2-di-(9Z-octadecenoyl)-glycerol + (9Z)-octadecenoate + H(+) = 1,2,3-tri-(9Z-octadecenoyl)-glycerol + H2O. It catalyses the reaction a 1,2-diacylglycerol + H2O = a 1-acylglycerol + a fatty acid + H(+). It carries out the reaction 1,2-di-(9Z-octadecenoyl)-glycerol + H2O = 1-(9Z-octadecenoyl)-glycerol + (9Z)-octadecenoate + H(+). The enzyme catalyses a 1,3-diacylglycerol + H2O = a 1-acylglycerol + a fatty acid + H(+). The catalysed reaction is 1,3-di-(9Z-octadecenoyl)-glycerol + H2O = 1-(9Z-octadecenoyl)-glycerol + (9Z)-octadecenoate + H(+). Catalyzes the deacylation of cholesteryl ester core lipids of endocytosed low density lipoproteins to generate free fatty acids and cholesterol. Hydrolyzes triglycerides (1,2,3-triacylglycerol) and diglycerides (such as 1,2-diacylglycerol and 1,3-diacylglycerol) with preference for the acyl moieties at the sn-1 or sn-3 positions. The chain is Lysosomal acid lipase/cholesteryl ester hydrolase (LIPA) from Macaca fascicularis (Crab-eating macaque).